Reading from the N-terminus, the 515-residue chain is Maturase K (515 aa).

It belongs to the intron maturase 2 family. MatK subfamily.

The protein localises to the plastid. The protein resides in the chloroplast. Usually encoded in the trnK tRNA gene intron. Probably assists in splicing its own and other chloroplast group II introns. The sequence is that of Maturase K from Pinus roxburghii (Chir pine).